Reading from the N-terminus, the 126-residue chain is Large ribosomal subunit protein bL12 (126 aa).

This sequence belongs to the bacterial ribosomal protein bL12 family. As to quaternary structure, homodimer. Part of the ribosomal stalk of the 50S ribosomal subunit. Forms a multimeric L10(L12)X complex, where L10 forms an elongated spine to which 2 to 4 L12 dimers bind in a sequential fashion. Binds GTP-bound translation factors.

Forms part of the ribosomal stalk which helps the ribosome interact with GTP-bound translation factors. Is thus essential for accurate translation. This Nitrosococcus oceani (strain ATCC 19707 / BCRC 17464 / JCM 30415 / NCIMB 11848 / C-107) protein is Large ribosomal subunit protein bL12.